The primary structure comprises 807 residues: Phenylalanine--tRNA ligase beta subunit (807 aa).

Positions Ala-39 to Arg-156 constitute a tRNA-binding domain. In terms of domain architecture, B5 spans Pro-409–Asn-488. The Mg(2+) site is built by Asp-466, Asp-472, Glu-475, and Glu-476. The FDX-ACB domain maps to Ser-713–Arg-806.

This sequence belongs to the phenylalanyl-tRNA synthetase beta subunit family. Type 1 subfamily. In terms of assembly, tetramer of two alpha and two beta subunits. It depends on Mg(2+) as a cofactor.

The protein resides in the cytoplasm. It catalyses the reaction tRNA(Phe) + L-phenylalanine + ATP = L-phenylalanyl-tRNA(Phe) + AMP + diphosphate + H(+). This is Phenylalanine--tRNA ligase beta subunit from Colwellia psychrerythraea (strain 34H / ATCC BAA-681) (Vibrio psychroerythus).